Reading from the N-terminus, the 1003-residue chain is Spheroidin (1003 aa).

Ser-2 is subject to N-acetylserine; by host. Residues 953–970 (DANSSSSDSCSDSSSSSE) show a composition bias toward low complexity. Positions 953-979 (DANSSSSDSCSDSSSSSESESDSDGCC) are disordered.

May form disulfide-bond-linked aggregates.

Its function is as follows. Major component of viral occlusion bodies, the protective complexes in which the virions are embedded in the cytoplasm of their insect hosts. This Amsacta (AmEPV) protein is Spheroidin.